The sequence spans 271 residues: ATP-dependent Clp protease proteolytic subunit 6, chloroplastic (271 aa).

The interval 1-30 is disordered; sequence MAGLAISPPLGLSFSSRTRNPKPTSFLSHN. Residues 1–77 constitute a chloroplast transit peptide; the sequence is MAGLAISPPL…KAPRFGVIEA (77 aa). A compositionally biased stretch (polar residues) spans 13–30; that stretch reads SFSSRTRNPKPTSFLSHN. Residue Ser-175 is the Nucleophile of the active site. His-200 is a catalytic residue.

This sequence belongs to the peptidase S14 family. In terms of assembly, component of the chloroplastic Clp protease core complex which consist of at least 16 proteins: CLPP4 (3 copies), CLPP5 (3 copies), CLPR4 (2 copies), ClpP1 (1 copy), CLPP6 (1 copy), CLPR2 (1 copy), CLPT1 (1 copy), CLPT2 (1 copy) and 3 copies of CLPP3 and/or CLPR1 and/or CLPR3. The core complex is organized in two heptameric rings, one containing CLPP3,4,5,6 in a 1:2:3:1 ratio and the other CLPP1 and CLPR1,2,3,4 in a 3:1:1:1:1 ratio. Mostly expressed in leaves. Also detected in stems, and to a lower extent, in roots (at protein level).

The protein resides in the plastid. It is found in the chloroplast stroma. The catalysed reaction is Hydrolysis of proteins to small peptides in the presence of ATP and magnesium. alpha-casein is the usual test substrate. In the absence of ATP, only oligopeptides shorter than five residues are hydrolyzed (such as succinyl-Leu-Tyr-|-NHMec, and Leu-Tyr-Leu-|-Tyr-Trp, in which cleavage of the -Tyr-|-Leu- and -Tyr-|-Trp bonds also occurs).. Functionally, cleaves peptides in various proteins in a process that requires ATP hydrolysis. Has a chymotrypsin-like activity. Plays a major role in the degradation of misfolded proteins. Essential protein required for chloroplast development and integrity. This Arabidopsis thaliana (Mouse-ear cress) protein is ATP-dependent Clp protease proteolytic subunit 6, chloroplastic.